Here is a 308-residue protein sequence, read N- to C-terminus: Oxygen-dependent coproporphyrinogen-III oxidase (308 aa).

S100 contributes to the substrate binding site. The a divalent metal cation site is built by H104 and H114. The active-site Proton donor is H114. 116–118 (NFR) is a substrate binding site. H153 and H183 together coordinate a divalent metal cation. The important for dimerization stretch occupies residues 248-283 (YVEFNLVFDRGTIFGLQSGGRTESILSSMPPIATWK). Position 266-268 (266-268 (GGR)) interacts with substrate.

The protein belongs to the aerobic coproporphyrinogen-III oxidase family. Homodimer. It depends on a divalent metal cation as a cofactor.

Its subcellular location is the cytoplasm. The catalysed reaction is coproporphyrinogen III + O2 + 2 H(+) = protoporphyrinogen IX + 2 CO2 + 2 H2O. It participates in porphyrin-containing compound metabolism; protoporphyrin-IX biosynthesis; protoporphyrinogen-IX from coproporphyrinogen-III (O2 route): step 1/1. Functionally, involved in the heme biosynthesis. Catalyzes the aerobic oxidative decarboxylation of propionate groups of rings A and B of coproporphyrinogen-III to yield the vinyl groups in protoporphyrinogen-IX. In Francisella tularensis subsp. tularensis (strain FSC 198), this protein is Oxygen-dependent coproporphyrinogen-III oxidase.